The following is a 366-amino-acid chain: D-alanine--D-alanine ligase (366 aa).

The 207-residue stretch at 146 to 352 folds into the ATP-grasp domain; that stretch reads KICFEHAGLQ…YTELINRLIE (207 aa). 179-234 provides a ligand contact to ATP; it reads EKKLRYPMFVKPANMGSSVGISKAHNRNELIEAIELALAYDRKFLIEKAINAREME. 3 residues coordinate Mg(2+): D305, E319, and N321.

This sequence belongs to the D-alanine--D-alanine ligase family. Mg(2+) serves as cofactor. Mn(2+) is required as a cofactor.

It is found in the cytoplasm. The enzyme catalyses 2 D-alanine + ATP = D-alanyl-D-alanine + ADP + phosphate + H(+). Its pathway is cell wall biogenesis; peptidoglycan biosynthesis. Functionally, cell wall formation. The sequence is that of D-alanine--D-alanine ligase from Chloroherpeton thalassium (strain ATCC 35110 / GB-78).